We begin with the raw amino-acid sequence, 258 residues long: Probable parvulin-type peptidyl-prolyl cis-trans isomerase (258 aa).

The signal sequence occupies residues 1-19 (MKRIAMLAAACVIAVPAFA). Residues 127–219 (KMEYKVRHIL…FGWHVIQVDD (93 aa)) form the PpiC domain. The segment covering 158–175 (DDLAKKNSKDPGSAERGG) has biased composition (basic and acidic residues). Residues 158-178 (DDLAKKNSKDPGSAERGGDLG) are disordered.

It belongs to the PpiC/parvulin rotamase family.

The catalysed reaction is [protein]-peptidylproline (omega=180) = [protein]-peptidylproline (omega=0). This chain is Probable parvulin-type peptidyl-prolyl cis-trans isomerase, found in Bordetella bronchiseptica (strain ATCC BAA-588 / NCTC 13252 / RB50) (Alcaligenes bronchisepticus).